We begin with the raw amino-acid sequence, 497 residues long: MORN repeat-containing protein 1 (497 aa).

The segment at 1 to 27 is disordered; that stretch reads MAAAGEGTPSSRGPRRDPPRRPPRNGY. 7 MORN repeats span residues 39–61, 62–84, 86–108, 109–131, 132–154, 155–177, and 178–200; these read YEGE…DGSY, YEGA…WSGD, FSGQ…AGGC, YEGE…DGQV, YQGS…NGDK, YDGD…DGST, and YKGQ…SGVT. Disordered stretches follow at residues 393–425 and 468–497; these read GGRS…ATEE and QPPH…PAPR.

The sequence is that of MORN repeat-containing protein 1 (MORN1) from Homo sapiens (Human).